Here is a 187-residue protein sequence, read N- to C-terminus: UPF0301 protein HS_0009 (187 aa).

The protein belongs to the UPF0301 (AlgH) family.

This is UPF0301 protein HS_0009 from Histophilus somni (strain 129Pt) (Haemophilus somnus).